The sequence spans 261 residues: Eukaryotic translation initiation factor 3 subunit J-A (261 aa).

Positions 1 to 11 (MAAAAAAAAAA) are enriched in low complexity. Residues 1-113 (MAAAAAAAAA…EPEESKVLTP (113 aa)) are disordered. Positions 4 to 72 (AAAAAAAAGD…KEEAEVKPEV (69 aa)) are sufficient for interaction with EIF3B. Phosphoserine is present on residues Ser-14, Ser-16, and Ser-23. Residues 43 to 64 (EGEDEDEDVKDNWDDDDDENKE) are compositionally biased toward acidic residues. The segment covering 65–109 (EAEVKPEVKISEKKKIAEKIKEKERQQKKRQEEIKKRLEEPEESK) has biased composition (basic and acidic residues). Residues 73-138 (KISEKKKIAE…ESDLELAKET (66 aa)) adopt a coiled-coil conformation. Residue Lys-109 forms a Glycyl lysine isopeptide (Lys-Gly) (interchain with G-Cter in SUMO2) linkage. Thr-112 is subject to Phosphothreonine. Ser-130 carries the post-translational modification Phosphoserine. The interval 246–261 (YGGYEGGYVQDYEDFM) is promotes stable association with the 40S ribosome. Phosphotyrosine is present on Tyr-257.

It belongs to the eIF-3 subunit J family. In terms of assembly, component of the eukaryotic translation initiation factor 3 (eIF-3) complex, which is composed of 13 subunits: EIF3A, EIF3B, EIF3C, EIF3D, EIF3E, EIF3F, EIF3G, EIF3H, EIF3I, EIF3J, EIF3K, EIF3L and EIF3M. The eIF-3 complex appears to include 3 stable modules: module A is composed of EIF3A, EIF3B, EIF3G and EIF3I; module B is composed of EIF3F, EIF3H, and EIF3M; and module C is composed of EIF3C, EIF3D, EIF3E, EIF3K and EIF3L. EIF3C of module C binds EIF3B of module A and EIF3H of module B, thereby linking the three modules. EIF3J is a labile subunit that binds to the eIF-3 complex via EIF3B. The eIF-3 complex interacts with RPS6KB1 under conditions of nutrient depletion. Mitogenic stimulation leads to binding and activation of a complex composed of MTOR and RPTOR, leading to phosphorylation and release of RPS6KB1 and binding of EIF4B to eIF-3. In terms of processing, phosphorylated. Phosphorylation is enhanced upon serum stimulation.

It localises to the cytoplasm. Functionally, component of the eukaryotic translation initiation factor 3 (eIF-3) complex, which is required for several steps in the initiation of protein synthesis. The eIF-3 complex associates with the 40S ribosome and facilitates the recruitment of eIF-1, eIF-1A, eIF-2:GTP:methionyl-tRNAi and eIF-5 to form the 43S pre-initiation complex (43S PIC). The eIF-3 complex stimulates mRNA recruitment to the 43S PIC and scanning of the mRNA for AUG recognition. The eIF-3 complex is also required for disassembly and recycling of post-termination ribosomal complexes and subsequently prevents premature joining of the 40S and 60S ribosomal subunits prior to initiation. The eIF-3 complex specifically targets and initiates translation of a subset of mRNAs involved in cell proliferation, including cell cycling, differentiation and apoptosis, and uses different modes of RNA stem-loop binding to exert either translational activation or repression. This subunit binds directly within the mRNA entry channel of the 40S ribosome to the aminoacyl (A) site. It may regulate the interaction between the 43S PIC and mRNA. In Mus musculus (Mouse), this protein is Eukaryotic translation initiation factor 3 subunit J-A (Eif3j1).